Consider the following 383-residue polypeptide: Xylose/arabinose import ATP-binding protein XacJ (383 aa).

The 232-residue stretch at 4 to 235 (IQLTDLTKRF…PNNLFVAEFI (232 aa)) folds into the ABC transporter domain. 36 to 43 (GPSGCGKS) contacts ATP.

It belongs to the ABC transporter superfamily. Carbohydrate uptake transporter-1 (CUT1) (TC 3.A.1.1) family. In terms of assembly, the complex is composed of two ATP-binding proteins (XacJ and XacK), two transmembrane proteins (XacH and XacI) and a solute-binding protein (XacG).

The protein localises to the cell membrane. It catalyses the reaction D-xylose(out) + ATP + H2O = D-xylose(in) + ADP + phosphate + H(+). The catalysed reaction is L-arabinose(out) + ATP + H2O = L-arabinose(in) + ADP + phosphate + H(+). In terms of biological role, part of the ABC transporter complex XacGHIJK involved in the uptake of xylose and arabinose. Responsible for energy coupling to the transport system. This chain is Xylose/arabinose import ATP-binding protein XacJ, found in Haloferax volcanii (strain ATCC 29605 / DSM 3757 / JCM 8879 / NBRC 14742 / NCIMB 2012 / VKM B-1768 / DS2) (Halobacterium volcanii).